Reading from the N-terminus, the 633-residue chain is Threonine--tRNA ligase (633 aa).

Residues 1–61 (MINVYFSDNS…TEDCKFEVIT (61 aa)) enclose the TGS domain. The catalytic stretch occupies residues 242-533 (DHRKIGKELE…LIEHHSGKLP (292 aa)). Residues C333, H384, and H510 each contribute to the Zn(2+) site.

The protein belongs to the class-II aminoacyl-tRNA synthetase family. As to quaternary structure, homodimer. It depends on Zn(2+) as a cofactor.

It is found in the cytoplasm. The enzyme catalyses tRNA(Thr) + L-threonine + ATP = L-threonyl-tRNA(Thr) + AMP + diphosphate + H(+). In terms of biological role, catalyzes the attachment of threonine to tRNA(Thr) in a two-step reaction: L-threonine is first activated by ATP to form Thr-AMP and then transferred to the acceptor end of tRNA(Thr). Also edits incorrectly charged L-seryl-tRNA(Thr). The polypeptide is Threonine--tRNA ligase (Ehrlichia ruminantium (strain Gardel)).